The following is a 289-amino-acid chain: Cyclin-dependent kinase 2 homolog (289 aa).

Residues 4-285 (YHGLEKIGEG…AKQAIEHPYF (282 aa)) form the Protein kinase domain. ATP-binding positions include 10–18 (IGEGTYGVV) and lysine 32. Threonine 14 carries the phosphothreonine modification. Position 15 is a phosphotyrosine (tyrosine 15). The Proton acceptor role is filled by aspartate 126. Threonine 159 is subject to Phosphothreonine.

This sequence belongs to the protein kinase superfamily. CMGC Ser/Thr protein kinase family. CDC2/CDKX subfamily. As to quaternary structure, may form a complex composed of at least the catalytic subunit CRK2 and a cyclin. Mg(2+) is required as a cofactor.

It localises to the cytoplasm. It carries out the reaction L-seryl-[protein] + ATP = O-phospho-L-seryl-[protein] + ADP + H(+). It catalyses the reaction L-threonyl-[protein] + ATP = O-phospho-L-threonyl-[protein] + ADP + H(+). The enzyme catalyses [DNA-directed RNA polymerase] + ATP = phospho-[DNA-directed RNA polymerase] + ADP + H(+). Phosphorylation at Thr-14 or Tyr-15 inactivates the enzyme, while phosphorylation at Thr-159 activates it. Serine/threonine-protein kinase. Involved in the control of the cell cycle. Required for entry into S-phase and mitosis. Probable component of the kinase complex that phosphorylates the repetitive C-terminus of RNA polymerase II. The polypeptide is Cyclin-dependent kinase 2 homolog (Plasmodium yoelii yoelii).